We begin with the raw amino-acid sequence, 879 residues long: Beta-alanyl-bioamine nonribosomal peptide synthetase ebony (879 aa).

The tract at residues 26-540 (FEEQQLRHAD…EHVPLLVNGK (515 aa)) is adenylation. One can recognise a Carrier domain in the interval 573–650 (EDLKLTARDL…EIIEKMAANH (78 aa)). O-(pantetheine 4'-phosphoryl)serine is present on Ser-611. Residues 666–679 (LKMEAVPLRLEHRQ) are condensation. Glu-696 contacts dopamine. Histamine is bound at residue Glu-696. Beta-alanine contacts are provided by Thr-825 and Asn-827.

It belongs to the NRP synthetase family. Requires pantetheine 4'-phosphate as cofactor. It depends on Mg(2+) as a cofactor. In terms of tissue distribution, expressed in the optic neuropils in the lamina and in distinct cells at the distal border of the medulla cortex (at protein level). Expressed in the protocerebrum and thoracic ganglia (at protein level). Expressed in antennal lobes, antennal nerves and subesophagic ganglion (at protein level). Specifically, expressed in epithelial glial cells of the medulla that surround the synaptic cleft of photoreceptor axonal endings (at protein level). Expressed in some cells in the cuticle.

The protein resides in the cytoplasm. The enzyme catalyses histamine + beta-alanine + ATP = carcinine + AMP + diphosphate + H(+). It carries out the reaction beta-alanine + ATP + H(+) = beta-alanyl-5'-AMP + diphosphate. The catalysed reaction is beta-alanyl-5'-AMP + holo-[peptidyl-carrier protein] = beta-alanyl-[peptidyl-carrier protein] + AMP + H(+). It catalyses the reaction beta-alanyl-[peptidyl-carrier protein] + histamine = carcinine + holo-[peptidyl-carrier protein] + H(+). The enzyme catalyses dopamine + beta-alanine + ATP = beta-alanyl-dopamine + AMP + diphosphate + H(+). It carries out the reaction beta-alanyl-[peptidyl-carrier protein] + dopamine = beta-alanyl-dopamine + holo-[peptidyl-carrier protein] + H(+). Its function is as follows. Nonribosomal peptide synthase which is required for the regulation of histamine and dopamine levels in various tissues through their condensation with beta-alanine. In epithelial glial cells, plays an essential role in the inactivation of histamine, the main neurotransmitter in the optical nerve system, by catalyzing the conversion of histamine into carcinine. In the cuticle, catalyzes the condensation of beta-alanine with dopamine to form beta-alanyl-dopamine (NBAD), a metabolite involved in the pigmentation and sclerotization of the insect cuticle. Also, regulates the cuticular hydrocarbon composition in females. Acts downstream of the body clock to regulate circadian behavioral rhythms. Can also condense beta-alanine with biogenic amines tyramine, octopamine, and serotonin in vitro. This is Beta-alanyl-bioamine nonribosomal peptide synthetase ebony from Drosophila melanogaster (Fruit fly).